Reading from the N-terminus, the 1073-residue chain is Carbamoyl phosphate synthase large chain (1073 aa).

The segment at 2 to 403 (PKRTDIKSIL…SLQKALRGLE (402 aa)) is carboxyphosphate synthetic domain. Arg129, Arg169, Gly175, Gly176, Glu208, Leu210, Glu215, Gly241, Ile242, His243, Gln285, and Glu299 together coordinate ATP. In terms of domain architecture, ATP-grasp 1 spans 133–328 (DVAMKKIGLE…IAKVAAKLAV (196 aa)). Mg(2+) is bound by residues Gln285, Glu299, and Asn301. Mn(2+) is bound by residues Gln285, Glu299, and Asn301. Positions 404-553 (VGATGFDPKV…YSTYEEECEA (150 aa)) are oligomerization domain. The interval 554–936 (NPSTDREKIM…AFAKAQLGSN (383 aa)) is carbamoyl phosphate synthetic domain. One can recognise an ATP-grasp 2 domain in the interval 679–870 (QHAVDRLKLK…LAKVAARVMA (192 aa)). 10 residues coordinate ATP: Arg715, His754, Leu756, Glu761, Gly786, Val787, His788, Ser789, Gln829, and Glu841. Mg(2+) is bound by residues Gln829, Glu841, and Asn843. Residues Gln829, Glu841, and Asn843 each contribute to the Mn(2+) site. One can recognise an MGS-like domain in the interval 937–1073 (STMKKHGRAL…SVQEMHAQIK (137 aa)). Positions 937–1073 (STMKKHGRAL…SVQEMHAQIK (137 aa)) are allosteric domain.

The protein belongs to the CarB family. In terms of assembly, composed of two chains; the small (or glutamine) chain promotes the hydrolysis of glutamine to ammonia, which is used by the large (or ammonia) chain to synthesize carbamoyl phosphate. Tetramer of heterodimers (alpha,beta)4. The cofactor is Mg(2+). Mn(2+) is required as a cofactor.

The enzyme catalyses hydrogencarbonate + L-glutamine + 2 ATP + H2O = carbamoyl phosphate + L-glutamate + 2 ADP + phosphate + 2 H(+). The catalysed reaction is hydrogencarbonate + NH4(+) + 2 ATP = carbamoyl phosphate + 2 ADP + phosphate + 2 H(+). Its pathway is amino-acid biosynthesis; L-arginine biosynthesis; carbamoyl phosphate from bicarbonate: step 1/1. It participates in pyrimidine metabolism; UMP biosynthesis via de novo pathway; (S)-dihydroorotate from bicarbonate: step 1/3. Its function is as follows. Large subunit of the glutamine-dependent carbamoyl phosphate synthetase (CPSase). CPSase catalyzes the formation of carbamoyl phosphate from the ammonia moiety of glutamine, carbonate, and phosphate donated by ATP, constituting the first step of 2 biosynthetic pathways, one leading to arginine and/or urea and the other to pyrimidine nucleotides. The large subunit (synthetase) binds the substrates ammonia (free or transferred from glutamine from the small subunit), hydrogencarbonate and ATP and carries out an ATP-coupled ligase reaction, activating hydrogencarbonate by forming carboxy phosphate which reacts with ammonia to form carbamoyl phosphate. In Escherichia coli O157:H7, this protein is Carbamoyl phosphate synthase large chain.